We begin with the raw amino-acid sequence, 612 residues long: Heparan-sulfate 6-O-sulfotransferase 2 (612 aa).

Residues 1-4 (MALP) lie on the Cytoplasmic side of the membrane. A helical; Signal-anchor for type II membrane protein transmembrane segment spans residues 5 to 27 (AFAARALGPPLQPEQGAPARTTC). A disordered region spans residues 9–52 (RALGPPLQPEQGAPARTTCPRRHSRVEAELAASRPGSVAASVRA). The Lumenal portion of the chain corresponds to 28–612 (PRRHSRVEAE…DYIGSVETWR (585 aa)). Asparagine 209 carries N-linked (GlcNAc...) asparagine glycosylation. 233–241 (HIQKTGGTT) lines the 3'-phosphoadenylyl sulfate pocket. Substrate-binding positions include 263–264 (KK), arginine 280, tryptophan 285, and histidine 290. Histidine 290 serves as the catalytic Proton acceptor. 3'-phosphoadenylyl sulfate contacts are provided by arginine 325 and serine 333. Positions 337 and 344 each coordinate substrate. Asparagine 404 is a glycosylation site (N-linked (GlcNAc...) asparagine). Position 457-459 (457-459 (TQY)) interacts with 3'-phosphoadenylyl sulfate. A glycan (N-linked (GlcNAc...) asparagine) is linked at asparagine 460. A 3'-phosphoadenylyl sulfate-binding site is contributed by 463 to 464 (RA). Residues 529–612 (HFQSQSQGQS…DYIGSVETWR (84 aa)) form a disordered region. Low complexity predominate over residues 531 to 564 (QSQSQGQSQSQSPGQNLSQNPNPNPNQNLTQNLS). 5 N-linked (GlcNAc...) asparagine glycosylation sites follow: asparagine 546, asparagine 558, asparagine 562, asparagine 574, and asparagine 599. Over residues 565 to 577 (HNLTPSSNPNSTQ) the composition is skewed to polar residues.

The protein belongs to the sulfotransferase 6 family.

The protein resides in the membrane. The enzyme catalyses alpha-D-glucosaminyl-[heparan sulfate](n) + 3'-phosphoadenylyl sulfate = 6-sulfo-alpha-D-glucosaminyl-[heparan sulfate](n) + adenosine 3',5'-bisphosphate + H(+). Functionally, 6-O-sulfation enzyme which catalyzes the transfer of sulfate from 3'-phosphoadenosine 5'-phosphosulfate (PAPS) to position 6 of the N-sulfoglucosamine residue (GlcNS) of heparan sulfate. The protein is Heparan-sulfate 6-O-sulfotransferase 2 (Hs6st2) of Mus musculus (Mouse).